The primary structure comprises 252 residues: Neurexophilin-3 (252 aa).

The first 22 residues, 1–22 (MQLTRCCFVFLVQGSLYLVICG), serve as a signal peptide directing secretion. The interval 23–75 (QDDGPPGSEDPEHDDHEGQPRPRVPRKRGHISPKSRPLANSTLLGLLAPPGEV) is II. The interval 27-59 (PPGSEDPEHDDHEGQPRPRVPRKRGHISPKSRP) is disordered. Positions 45-55 (RVPRKRGHISP) are enriched in basic residues. N62, N127, N137, and N143 each carry an N-linked (GlcNAc...) asparagine glycan. An III region spans residues 76–157 (WGVLGQPPNR…LVPPSKAVEF (82 aa)). Positions 158–166 (HQEQQIFIE) are IV (linker domain). A v (Cys-rich) region spans residues 167–252 (AKASKIFNCR…HSDTPYYPSG (86 aa)).

The protein belongs to the neurexophilin family. Post-translationally, may be proteolytically processed at the boundary between the N-terminal non-conserved and the central conserved domain in neuron-like cells. In terms of tissue distribution, highest level in brain, present also in lung, kidney and testis.

It localises to the secreted. Its function is as follows. May be signaling molecules that resemble neuropeptides. Ligand for alpha-neurexins. In Mus musculus (Mouse), this protein is Neurexophilin-3 (Nxph3).